The sequence spans 502 residues: ATP synthase subunit alpha (502 aa).

169–176 contacts ATP; sequence GDRQTGKT.

It belongs to the ATPase alpha/beta chains family. F-type ATPases have 2 components, CF(1) - the catalytic core - and CF(0) - the membrane proton channel. CF(1) has five subunits: alpha(3), beta(3), gamma(1), delta(1), epsilon(1). CF(0) has three main subunits: a(1), b(2) and c(9-12). The alpha and beta chains form an alternating ring which encloses part of the gamma chain. CF(1) is attached to CF(0) by a central stalk formed by the gamma and epsilon chains, while a peripheral stalk is formed by the delta and b chains.

Its subcellular location is the cell inner membrane. It carries out the reaction ATP + H2O + 4 H(+)(in) = ADP + phosphate + 5 H(+)(out). In terms of biological role, produces ATP from ADP in the presence of a proton gradient across the membrane. The alpha chain is a regulatory subunit. The polypeptide is ATP synthase subunit alpha (Solidesulfovibrio magneticus (strain ATCC 700980 / DSM 13731 / RS-1) (Desulfovibrio magneticus)).